Consider the following 207-residue polypeptide: Probable GTP-binding protein EngB (207 aa).

One can recognise an EngB-type G domain in the interval 22 to 194; it reads DLPEVAFAGR…LQRLDVALSD (173 aa). Residues 30-37, 57-61, 75-78, 142-145, and 173-175 each bind GTP; these read GRSNVGKS, GRTQL, DLPG, TKVD, and FSA. The Mg(2+) site is built by S37 and T59.

This sequence belongs to the TRAFAC class TrmE-Era-EngA-EngB-Septin-like GTPase superfamily. EngB GTPase family. Mg(2+) serves as cofactor.

Functionally, necessary for normal cell division and for the maintenance of normal septation. This is Probable GTP-binding protein EngB from Syntrophotalea carbinolica (strain DSM 2380 / NBRC 103641 / GraBd1) (Pelobacter carbinolicus).